Here is a 346-residue protein sequence, read N- to C-terminus: Zinc-type alcohol dehydrogenase-like protein C1773.06c (346 aa).

The protein belongs to the zinc-containing alcohol dehydrogenase family. Quinone oxidoreductase subfamily.

It is found in the cytoplasm. This chain is Zinc-type alcohol dehydrogenase-like protein C1773.06c, found in Schizosaccharomyces pombe (strain 972 / ATCC 24843) (Fission yeast).